Consider the following 671-residue polypeptide: UvrABC system protein B (671 aa).

Positions 25–412 constitute a Helicase ATP-binding domain; the sequence is EGIEAGLSHQ…AGRVVEQVVR (388 aa). 38–45 is a binding site for ATP; it reads GVTGSGKT. The Beta-hairpin motif lies at 91-114; that stretch reads YYDYYQPEAYVPSSDTFIEKDASI. Residues 429–582 enclose the Helicase C-terminal domain; sequence QVDDLLSEIR…QIAFNEANGI (154 aa). One can recognise a UVR domain in the interval 632 to 667; the sequence is TKRIKQLEEKMMQFARDLEFEAAAQLRDEIAQLRER.

The protein belongs to the UvrB family. In terms of assembly, forms a heterotetramer with UvrA during the search for lesions. Interacts with UvrC in an incision complex.

The protein localises to the cytoplasm. The UvrABC repair system catalyzes the recognition and processing of DNA lesions. A damage recognition complex composed of 2 UvrA and 2 UvrB subunits scans DNA for abnormalities. Upon binding of the UvrA(2)B(2) complex to a putative damaged site, the DNA wraps around one UvrB monomer. DNA wrap is dependent on ATP binding by UvrB and probably causes local melting of the DNA helix, facilitating insertion of UvrB beta-hairpin between the DNA strands. Then UvrB probes one DNA strand for the presence of a lesion. If a lesion is found the UvrA subunits dissociate and the UvrB-DNA preincision complex is formed. This complex is subsequently bound by UvrC and the second UvrB is released. If no lesion is found, the DNA wraps around the other UvrB subunit that will check the other stand for damage. This Pseudomonas putida (strain ATCC 47054 / DSM 6125 / CFBP 8728 / NCIMB 11950 / KT2440) protein is UvrABC system protein B.